Reading from the N-terminus, the 732-residue chain is Probable zinc transporter cis4 (732 aa).

Transmembrane regions (helical) follow at residues 52–72, 79–99, 111–131, 163–183, 189–209, 219–239, 240–260, 268–288, 350–370, 380–400, 415–435, and 453–473; these read ETLG…GLEV, FYLI…LGIY, VIIA…LGTL, YIAF…LGYF, VFYA…FYLV, LAFL…VLPL, GTIN…IFCI, IQFY…SAII, IFYF…YGLW, AIHM…TTLA, IEAL…FSIV, and LLLV…AFNH. The interval 526–547 is disordered; it reads HVSQHEHTHENSQEHHHEHNHN. 2 helical membrane-spanning segments follow: residues 586 to 606 and 615 to 635; these read IFLH…STIL and FDPL…LPLI.

It belongs to the cation diffusion facilitator (CDF) transporter (TC 2.A.4) family. SLC30A subfamily. Interacts with zrg17.

Its subcellular location is the endoplasmic reticulum membrane. It localises to the golgi apparatus. It is found in the cis-Golgi network membrane. In terms of biological role, probable zinc transporter involved in Golgi membrane trafficking through the regulation of zinc homeostasis. This is Probable zinc transporter cis4 (cis4) from Schizosaccharomyces pombe (strain 972 / ATCC 24843) (Fission yeast).